The primary structure comprises 334 residues: Ketol-acid reductoisomerase (NADP(+)) (334 aa).

Residues 1-181 (MNIYYDKNAD…GGGRTGILET (181 aa)) form the KARI N-terminal Rossmann domain. NADP(+) is bound by residues 24–27 (YGSQ), Arg-47, Ser-50, Ser-52, and 82–85 (DEFQ). His-107 is a catalytic residue. Gly-133 contributes to the NADP(+) binding site. The 142-residue stretch at 182–323 (SFKDETETDL…ESLRSMMPWI (142 aa)) folds into the KARI C-terminal knotted domain. Positions 190, 194, 226, and 230 each coordinate Mg(2+). Position 251 (Ser-251) interacts with substrate.

The protein belongs to the ketol-acid reductoisomerase family. Requires Mg(2+) as cofactor.

It catalyses the reaction (2R)-2,3-dihydroxy-3-methylbutanoate + NADP(+) = (2S)-2-acetolactate + NADPH + H(+). It carries out the reaction (2R,3R)-2,3-dihydroxy-3-methylpentanoate + NADP(+) = (S)-2-ethyl-2-hydroxy-3-oxobutanoate + NADPH + H(+). The protein operates within amino-acid biosynthesis; L-isoleucine biosynthesis; L-isoleucine from 2-oxobutanoate: step 2/4. It participates in amino-acid biosynthesis; L-valine biosynthesis; L-valine from pyruvate: step 2/4. Its function is as follows. Involved in the biosynthesis of branched-chain amino acids (BCAA). Catalyzes an alkyl-migration followed by a ketol-acid reduction of (S)-2-acetolactate (S2AL) to yield (R)-2,3-dihydroxy-isovalerate. In the isomerase reaction, S2AL is rearranged via a Mg-dependent methyl migration to produce 3-hydroxy-3-methyl-2-ketobutyrate (HMKB). In the reductase reaction, this 2-ketoacid undergoes a metal-dependent reduction by NADPH to yield (R)-2,3-dihydroxy-isovalerate. This is Ketol-acid reductoisomerase (NADP(+)) from Vesicomyosocius okutanii subsp. Calyptogena okutanii (strain HA).